A 184-amino-acid chain; its full sequence is Probable N-acetyltransferase san (184 aa).

The N-acetyltransferase domain occupies 6–155; the sequence is IELGDVTPHN…DAHVLQKTLR (150 aa). A substrate-binding site is contributed by Tyr-31. Lys-47 carries the post-translational modification N6-acetyllysine; by autocatalysis. Tyr-73 is a catalytic residue. A substrate-binding site is contributed by Met-75. Acetyl-CoA is bound at residue 77–90; that stretch reads LGCLSPYRRLGIGT. The active site involves His-112. Residue 117–126 participates in CoA binding; that stretch reads NNGAIEFYKK. The substrate stretch occupies residues 138 to 141; that stretch reads YYKR. The segment covering 157-174 has biased composition (low complexity); sequence TAPNSNSTATSTTANSNS. Residues 157 to 176 form a disordered region; it reads TAPNSNSTATSTTANSNSRS.

Belongs to the acetyltransferase family. As to quaternary structure, component of an acetyltransferase complex, at least composed of san, Ard1 and Nat1. Post-translationally, autoacetylated.

It localises to the cytoplasm. The enzyme catalyses N-terminal L-methionyl-L-alanyl-[protein] + acetyl-CoA = N-terminal N(alpha)-acetyl-L-methionyl-L-alanyl-[protein] + CoA + H(+). The catalysed reaction is N-terminal L-methionyl-L-seryl-[protein] + acetyl-CoA = N-terminal N(alpha)-acetyl-L-methionyl-L-seryl-[protein] + CoA + H(+). It catalyses the reaction N-terminal L-methionyl-L-valyl-[protein] + acetyl-CoA = N-terminal N(alpha)-acetyl-L-methionyl-L-valyl-[protein] + CoA + H(+). It carries out the reaction N-terminal L-methionyl-L-threonyl-[protein] + acetyl-CoA = N-terminal N(alpha)-acetyl-L-methionyl-L-threonyl-[protein] + CoA + H(+). The enzyme catalyses N-terminal L-methionyl-L-lysyl-[protein] + acetyl-CoA = N-terminal N(alpha)-acetyl-L-methionyl-L-lysyl-[protein] + CoA + H(+). The catalysed reaction is N-terminal L-methionyl-L-leucyl-[protein] + acetyl-CoA = N-terminal N(alpha)-acetyl-L-methionyl-L-leucyl-[protein] + CoA + H(+). It catalyses the reaction N-terminal L-methionyl-L-phenylalanyl-[protein] + acetyl-CoA = N-terminal N(alpha)-acetyl-L-methionyl-L-phenylalanyl-[protein] + CoA + H(+). It carries out the reaction N-terminal L-methionyl-L-tyrosyl-[protein] + acetyl-CoA = N-terminal N(alpha)-acetyl-L-methionyl-L-tyrosyl-[protein] + CoA + H(+). Its function is as follows. N-alpha-acetyltransferase that acetylates the N-terminus of proteins that retain their initiating methionine. Has a broad substrate specificity: able to acetylate the initiator methionine of most peptides. Also displays N-epsilon-acetyltransferase activity by mediating acetylation of the side chain of specific lysines on proteins. Autoacetylates. Required for the establishment of sister chromatid cohesion and couple the processes of cohesion and DNA replication to ensure that only sister chromatids become paired together. Required for the interaction between Scc1/vtd and SMC3, possibly by mediating N-terminal acetylation of Scc1/vtd. (Microbial infection) Required for optimal replication of E.chaffeensis in the immune tissues, hemocytes, and fat body. The sequence is that of Probable N-acetyltransferase san (san) from Drosophila melanogaster (Fruit fly).